A 152-amino-acid polypeptide reads, in one-letter code: Ribonuclease pancreatic gamma-type (152 aa).

Residues 1–25 (MGLEKSFILFSLLVLVLGCVQPSLV) form the signal peptide. The segment at 26–48 (GESKESPSEKFKRRHMDEEGPYQ) is disordered. A compositionally biased stretch (basic and acidic residues) spans 27–43 (ESKESPSEKFKRRHMDE). Lysine 35 and arginine 38 together coordinate substrate. Catalysis depends on histidine 40, which acts as the Proton acceptor. Intrachain disulfides connect cysteine 54/cysteine 112, cysteine 68/cysteine 123, cysteine 86/cysteine 138, and cysteine 93/cysteine 100. Residues 69-73 (KPLNT) and lysine 94 contribute to the substrate site. Residue histidine 147 is the Proton donor of the active site.

This sequence belongs to the pancreatic ribonuclease family. In terms of assembly, monomer.

It is found in the secreted. It carries out the reaction an [RNA] containing cytidine + H2O = an [RNA]-3'-cytidine-3'-phosphate + a 5'-hydroxy-ribonucleotide-3'-[RNA].. The catalysed reaction is an [RNA] containing uridine + H2O = an [RNA]-3'-uridine-3'-phosphate + a 5'-hydroxy-ribonucleotide-3'-[RNA].. Functionally, endonuclease that catalyzes the cleavage of RNA on the 3' side of pyrimidine nucleotides. Acts on single-stranded and double-stranded RNA. In Rattus fuscipes (Bush rat), this protein is Ribonuclease pancreatic gamma-type.